Consider the following 524-residue polypeptide: MKKIMLIASAMSALSLPFSASAIELGEEGGLECGPYGKVGIVGGMITGAESTRLDSTDSEGKKHLSLTTGLPFGGTLAAGMTIAPGFRAELGVMYLRNISAEVEVGKGKVDSKGEIKADSGGGTDTPIRKRFKLTPPQPTIMPISIADRDVGVDTDILAQAAAGQPQLTVEQRAADRIAWLKNYAGIDYMVPDPQNPNARVINPVLLNITQGPPNVQPRPRQNLDILDHGQWRHLVVGVTALSHANKPSVTPVKVLSDKITKIYSDIKPFADIAGIDVPDTGLPNSASVEQIQSKMQELNDVLEDLRDSFDGYMGNAFANQIQLNFVMPQQAQQQQGQGQQQQAQATAQEAVAAAAVRLLNGNDQIAQLYKDLVKLQRHAGVKKAMEKLAAQQEEDAKNQGEGDCKQQQGASEKSKEGKGKETEFDLSMIVGQVKLYADLFTTESFSIYAGVGAGLAHTYGKIDDKDIKGHTGMVASGALGVAINAAEGVYVDLEGSYMHSFSKIEEKYSINPLMASVGVRYNF.

Positions 1-22 are cleaved as a signal peptide; that stretch reads MKKIMLIASAMSALSLPFSASA. A helical transmembrane segment spans residues 67 to 87; sequence LTTGLPFGGTLAAGMTIAPGF. 2 disordered regions span residues 112–132 and 387–422; these read SKGEIKADSGGGTDTPIRKRF and EKLAAQQEEDAKNQGEGDCKQQQGASEKSKEGKGKE. Composition is skewed to basic and acidic residues over residues 395–405 and 413–422; these read EDAKNQGEGDC and EKSKEGKGKE. A helical membrane pass occupies residues 472-492; sequence TGMVASGALGVAINAAEGVYV.

It localises to the cell membrane. In terms of biological role, may be an adherent factor for rickettsial adsorption to the host-cell surface and a determinant of virulence of individual rickettsial strain. It is the major outer membrane protein. This is 56 kDa type-specific antigen from Orientia tsutsugamushi (Rickettsia tsutsugamushi).